Reading from the N-terminus, the 261-residue chain is tRNA U34 carboxymethyltransferase (261 aa).

Carboxy-S-adenosyl-L-methionine-binding positions include K25, W39, K44, G63, V114–E115, Y135, and R250.

It belongs to the class I-like SAM-binding methyltransferase superfamily. CmoB family. Homotetramer.

The enzyme catalyses carboxy-S-adenosyl-L-methionine + 5-hydroxyuridine(34) in tRNA = 5-carboxymethoxyuridine(34) in tRNA + S-adenosyl-L-homocysteine + H(+). In terms of biological role, catalyzes carboxymethyl transfer from carboxy-S-adenosyl-L-methionine (Cx-SAM) to 5-hydroxyuridine (ho5U) to form 5-carboxymethoxyuridine (cmo5U) at position 34 in tRNAs. This Helicobacter pylori (strain HPAG1) protein is tRNA U34 carboxymethyltransferase.